We begin with the raw amino-acid sequence, 585 residues long: Bifunctional lycopene cyclase/phytoene synthase (585 aa).

The segment at methionine 1–asparagine 243 is lycopene beta-cyclase. 7 helical membrane-spanning segments follow: residues phenylalanine 3–leucine 23, lysine 35–isoleucine 55, isoleucine 75–leucine 97, leucine 123–histidine 141, leucine 151–isoleucine 171, glycine 173–valine 193, and isoleucine 221–phenylalanine 241. Residues threonine 250–alanine 585 form a phytoene synthase region.

The protein in the N-terminal section; belongs to the lycopene beta-cyclase family. It in the C-terminal section; belongs to the phytoene/squalene synthase family.

Its subcellular location is the membrane. The enzyme catalyses all-trans-lycopene = gamma-carotene. The catalysed reaction is gamma-carotene = all-trans-beta-carotene. It catalyses the reaction 2 (2E,6E,10E)-geranylgeranyl diphosphate = 15-cis-phytoene + 2 diphosphate. It functions in the pathway carotenoid biosynthesis; beta-carotene biosynthesis. It participates in carotenoid biosynthesis; phytoene biosynthesis; all-trans-phytoene from geranylgeranyl diphosphate: step 1/1. Functionally, bifunctional enzyme that catalyzes the reactions from geranylgeranyl diphosphate to phytoene (phytoene synthase) and lycopene to beta-carotene via the intermediate gamma-carotene (lycopene cyclase). The protein is Bifunctional lycopene cyclase/phytoene synthase of Phaeosphaeria nodorum (strain SN15 / ATCC MYA-4574 / FGSC 10173) (Glume blotch fungus).